A 348-amino-acid chain; its full sequence is uncharacterized protein (348 aa).

This is an uncharacterized protein from Caenorhabditis elegans.